The chain runs to 403 residues: Phosphoglycerate kinase (403 aa).

Residues Asp-21–Asn-23, Arg-36, His-59–Arg-62, Arg-119, and Arg-154 each bind substrate. ATP contacts are provided by residues Lys-207, Gly-299, Glu-330, and Gly-357–Ala-360.

It belongs to the phosphoglycerate kinase family. As to quaternary structure, monomer.

Its subcellular location is the cytoplasm. The enzyme catalyses (2R)-3-phosphoglycerate + ATP = (2R)-3-phospho-glyceroyl phosphate + ADP. Its pathway is carbohydrate degradation; glycolysis; pyruvate from D-glyceraldehyde 3-phosphate: step 2/5. This Chlamydia felis (strain Fe/C-56) (Chlamydophila felis) protein is Phosphoglycerate kinase.